Here is a 331-residue protein sequence, read N- to C-terminus: Hyaluronidase B (331 aa).

Intrachain disulfides connect Cys-19/Cys-308 and Cys-185/Cys-197. Residue Asn-79 is glycosylated (N-linked (GlcNAc...) asparagine). Glu-109 acts as the Proton donor in catalysis.

The protein belongs to the glycosyl hydrolase 56 family. Expressed by the venom gland.

Its subcellular location is the secreted. It carries out the reaction Random hydrolysis of (1-&gt;4)-linkages between N-acetyl-beta-D-glucosamine and D-glucuronate residues in hyaluronate.. In terms of biological role, hydrolyzes high molecular weight hyaluronic acid to produce small oligosaccharides. This chain is Hyaluronidase B, found in Vespa velutina (Asian yellow-legged hornet).